A 578-amino-acid polypeptide reads, in one-letter code: Isocitrate dehydrogenase kinase/phosphatase (578 aa).

ATP is bound by residues 315–321 and K336; that span reads APGIRGM. D371 is an active-site residue.

This sequence belongs to the AceK family.

The protein localises to the cytoplasm. It carries out the reaction L-seryl-[isocitrate dehydrogenase] + ATP = O-phospho-L-seryl-[isocitrate dehydrogenase] + ADP + H(+). Its function is as follows. Bifunctional enzyme which can phosphorylate or dephosphorylate isocitrate dehydrogenase (IDH) on a specific serine residue. This is a regulatory mechanism which enables bacteria to bypass the Krebs cycle via the glyoxylate shunt in response to the source of carbon. When bacteria are grown on glucose, IDH is fully active and unphosphorylated, but when grown on acetate or ethanol, the activity of IDH declines drastically concomitant with its phosphorylation. The sequence is that of Isocitrate dehydrogenase kinase/phosphatase from Escherichia coli O139:H28 (strain E24377A / ETEC).